A 61-amino-acid chain; its full sequence is Copper metallothionein 1-1 (61 aa).

The propeptide occupies 1–8; the sequence is MFSELINF. Cu cation is bound by residues cysteine 15, cysteine 17, cysteine 19, cysteine 22, and cysteine 28. Residue lysine 30 forms a Glycyl lysine isopeptide (Lys-Gly) (interchain with G-Cter in ubiquitin) linkage. Residues cysteine 32, cysteine 34, cysteine 38, cysteine 44, and cysteine 46 each contribute to the Cu cation site. Residues 37–61 form a disordered region; sequence GCNSDDKCPCGNKSEETKKSCCSGK. Positions 40–55 are enriched in basic and acidic residues; the sequence is SDDKCPCGNKSEETKK.

It belongs to the metallothionein superfamily. Type 12 family.

In terms of biological role, protects the cell against copper toxicity by tightly chelating copper ions. May also act as a depository for copper designated for the effective transfer into the apo forms of copper proteins. This Saccharomyces cerevisiae (strain ATCC 204508 / S288c) (Baker's yeast) protein is Copper metallothionein 1-1 (CUP1-1).